Reading from the N-terminus, the 76-residue chain is U14-hexatoxin-Hi1a (76 aa).

Positions 1–18 (MMQLAVLICLSLVVNTFA) are cleaved as a signal peptide. Disulfide bonds link C21/C34, C27/C39, and C33/C61.

As to expression, expressed by the venom gland.

It localises to the secreted. Probable ion channel inhibitor. This Hadronyche infensa (Fraser island funnel-web spider) protein is U14-hexatoxin-Hi1a.